The following is a 108-amino-acid chain: Mitochondrial pyruvate carrier 4 (108 aa).

A run of 3 helical transmembrane segments spans residues 19–35 (IHFW…IANI), 51–67 (IAVT…SMVI), and 74–90 (LFSV…YQLA).

The protein belongs to the mitochondrial pyruvate carrier (MPC) (TC 2.A.105) family.

It localises to the mitochondrion inner membrane. In terms of biological role, mediates the uptake of pyruvate into mitochondria. This is Mitochondrial pyruvate carrier 4 from Arabidopsis thaliana (Mouse-ear cress).